We begin with the raw amino-acid sequence, 264 residues long: ATP synthase subunit a (264 aa).

7 consecutive transmembrane segments (helical) span residues 41–61, 99–119, 129–149, 156–176, 194–214, 217–237, and 238–258; these read ITNIGFYLTMGAFFLLIINLL, IYFPFIYALFIFILINNLIGM, HFVLTFALSFTIVLGATILGF, FFSLLVPAGCPLGLLPLLVLI, ANILSGHMLLHILAGFTYNIM, GIIFFFLGLIPLAFIIAFSGL, and ELGIAFIQAQVFVVLTSGYIK.

It belongs to the ATPase A chain family. F-type ATPases have 2 components, CF(1) - the catalytic core - and CF(0) - the membrane proton channel. CF(1) has five subunits: alpha(3), beta(3), gamma(1), delta(1), epsilon(1). CF(0) has three main subunits: a, b and c.

The protein resides in the mitochondrion inner membrane. In terms of biological role, mitochondrial membrane ATP synthase (F(1)F(0) ATP synthase or Complex V) produces ATP from ADP in the presence of a proton gradient across the membrane which is generated by electron transport complexes of the respiratory chain. F-type ATPases consist of two structural domains, F(1) - containing the extramembraneous catalytic core and F(0) - containing the membrane proton channel, linked together by a central stalk and a peripheral stalk. During catalysis, ATP synthesis in the catalytic domain of F(1) is coupled via a rotary mechanism of the central stalk subunits to proton translocation. Key component of the proton channel; it may play a direct role in the translocation of protons across the membrane. The polypeptide is ATP synthase subunit a (ATP6) (Podospora anserina (strain S / ATCC MYA-4624 / DSM 980 / FGSC 10383) (Pleurage anserina)).